The primary structure comprises 484 residues: EF-hand calcium-binding domain-containing protein 14 (484 aa).

Disordered stretches follow at residues 1 to 48 (MKKR…TDEE), 227 to 255 (GSME…HSES), and 313 to 395 (EQRT…FTSD). Over residues 37 to 48 (PDSDSESSTDEE) the composition is skewed to acidic residues. Composition is skewed to polar residues over residues 228–239 (SMENNGSNQILP), 315–324 (RTNVSSSTME), and 335–347 (LVTN…QAQS). EF-hand domains lie at 423–452 (SSIK…WNSL) and 453–484 (GSAM…ALGI). Ca(2+)-binding residues include D466, N468, D470, R472, and E477.

The protein is EF-hand calcium-binding domain-containing protein 14 (Efcab14) of Mus musculus (Mouse).